The sequence spans 311 residues: Acetyl-coenzyme A carboxylase carboxyl transferase subunit alpha (311 aa).

The CoA carboxyltransferase C-terminal domain maps to 36 to 286 (KLEKEVEKTF…KEYFIKSLAE (251 aa)).

It belongs to the AccA family. Acetyl-CoA carboxylase is a heterohexamer composed of biotin carboxyl carrier protein (AccB), biotin carboxylase (AccC) and two subunits each of ACCase subunit alpha (AccA) and ACCase subunit beta (AccD).

Its subcellular location is the cytoplasm. The catalysed reaction is N(6)-carboxybiotinyl-L-lysyl-[protein] + acetyl-CoA = N(6)-biotinyl-L-lysyl-[protein] + malonyl-CoA. It functions in the pathway lipid metabolism; malonyl-CoA biosynthesis; malonyl-CoA from acetyl-CoA: step 1/1. Component of the acetyl coenzyme A carboxylase (ACC) complex. First, biotin carboxylase catalyzes the carboxylation of biotin on its carrier protein (BCCP) and then the CO(2) group is transferred by the carboxyltransferase to acetyl-CoA to form malonyl-CoA. This Aliarcobacter butzleri (strain RM4018) (Arcobacter butzleri) protein is Acetyl-coenzyme A carboxylase carboxyl transferase subunit alpha.